We begin with the raw amino-acid sequence, 343 residues long: MGEIMKFYDREKELNYLKTYCQLEPNSILFVYGPKSSGKSTVMRRVIKELENSNIVFFYYNLRKYATPTRDEFLRVFFEKSDKKYLLNKLELNLGVCKFGIEENFDFNNLCLNDVFAKINESINAVVEEGKKPVLIIDELQKLKNIYFNGGKSLLNELFNLFVSLTKMEHLCHVICLTSDTLFIDEIYRNSTLKNASEYYLIDWLRKGTIRNILKEEGFSEEEINYALDYLSLPYEISQLINNKKLGLSVEQTIKQWINVEKDGLKYLIDTTDLDEEGLYNVLSKFKDKIKISYDKEVKKEEMKYLKFLIENEILFYDVINGIIKPTSIIEWHAIKEIINAMQ.

33–40 contributes to the ATP binding site; sequence GPKSSGKS.

The protein belongs to the archaeal ATPase family.

This is an uncharacterized protein from Methanocaldococcus jannaschii (strain ATCC 43067 / DSM 2661 / JAL-1 / JCM 10045 / NBRC 100440) (Methanococcus jannaschii).